The sequence spans 230 residues: 5'-methylthioadenosine/S-adenosylhomocysteine nucleosidase (230 aa).

The active-site Proton acceptor is the Glu12. Substrate contacts are provided by residues Gly78, Ile152, and 173-174; that span reads ME. The active-site Proton donor is the Asp197.

It belongs to the PNP/UDP phosphorylase family. MtnN subfamily.

It carries out the reaction S-adenosyl-L-homocysteine + H2O = S-(5-deoxy-D-ribos-5-yl)-L-homocysteine + adenine. The catalysed reaction is S-methyl-5'-thioadenosine + H2O = 5-(methylsulfanyl)-D-ribose + adenine. It catalyses the reaction 5'-deoxyadenosine + H2O = 5-deoxy-D-ribose + adenine. It functions in the pathway amino-acid biosynthesis; L-methionine biosynthesis via salvage pathway; S-methyl-5-thio-alpha-D-ribose 1-phosphate from S-methyl-5'-thioadenosine (hydrolase route): step 1/2. Its function is as follows. Catalyzes the irreversible cleavage of the glycosidic bond in both 5'-methylthioadenosine (MTA) and S-adenosylhomocysteine (SAH/AdoHcy) to adenine and the corresponding thioribose, 5'-methylthioribose and S-ribosylhomocysteine, respectively. Also cleaves 5'-deoxyadenosine, a toxic by-product of radical S-adenosylmethionine (SAM) enzymes, into 5-deoxyribose and adenine. In Actinobacillus succinogenes (strain ATCC 55618 / DSM 22257 / CCUG 43843 / 130Z), this protein is 5'-methylthioadenosine/S-adenosylhomocysteine nucleosidase.